We begin with the raw amino-acid sequence, 146 residues long: Leghemoglobin 2 (146 aa).

The 145-residue stretch at 2 to 146 (GFTAQQDALV…LAAAIKKAMS (145 aa)) folds into the Globin domain. Position 30 is a nitrated tyrosine (Tyr-30). Heme b is bound at residue Ser-45. Ser-45 is subject to Phosphoserine. His-61 provides a ligand contact to O2. Lys-64, His-93, and Lys-96 together coordinate heme b. A Nitrated tyrosine modification is found at Tyr-134.

Belongs to the plant globin family. In terms of assembly, monomer. Post-translationally, nitrated in effective nodules and particularly in hypoxic conditions; this mechanism may play a protective role in the symbiosis by buffering toxic peroxynitrite NO(2)(-). Nitration level decrease during nodule senescence. In terms of processing, phosphorylation at Ser-45 disrupts the molecular environment of its porphyrin ring oxygen binding pocket, thus leading to a reduced oxygen consumption and to the delivery of oxygen O(2) to symbiosomes. In terms of tissue distribution, specifically and strongly expressed in root nodules and at low levels in seedlings.

The protein localises to the cytoplasm. Its subcellular location is the cytosol. It localises to the nucleus. Leghemoglobin that reversibly binds oxygen O(2) through a pentacoordinated heme iron. In root nodules, facilitates the diffusion of oxygen to the bacteroids while preventing the bacterial nitrogenase from being inactivated by buffering dioxygen, nitric oxide and carbon monoxide, and promoting the formation of reactive oxygen species (ROS, e.g. H(2)O(2)). This role is essential for symbiotic nitrogen fixation (SNF). This chain is Leghemoglobin 2, found in Lotus japonicus (Lotus corniculatus var. japonicus).